Here is a 165-residue protein sequence, read N- to C-terminus: S-ribosylhomocysteine lyase (165 aa).

Positions 54, 58, and 128 each coordinate Fe cation.

The protein belongs to the LuxS family. As to quaternary structure, homodimer. Requires Fe cation as cofactor.

It carries out the reaction S-(5-deoxy-D-ribos-5-yl)-L-homocysteine = (S)-4,5-dihydroxypentane-2,3-dione + L-homocysteine. In terms of biological role, involved in the synthesis of autoinducer 2 (AI-2) which is secreted by bacteria and is used to communicate both the cell density and the metabolic potential of the environment. The regulation of gene expression in response to changes in cell density is called quorum sensing. Catalyzes the transformation of S-ribosylhomocysteine (RHC) to homocysteine (HC) and 4,5-dihydroxy-2,3-pentadione (DPD). The chain is S-ribosylhomocysteine lyase from Helicobacter hepaticus (strain ATCC 51449 / 3B1).